A 671-amino-acid polypeptide reads, in one-letter code: Fusexin 1 (671 aa).

At 1-12 (MRAVSDFLKNKW) the chain is on the cytoplasmic side. A helical transmembrane segment spans residues 13–33 (VAVPAVALLILSLGFLAQNYI). Over 34–574 (TGSFVSGDQI…DPFCADGPLE (541 aa)) the chain is Extracellular. Disulfide bonds link cysteine 145–cysteine 180, cysteine 409–cysteine 452, cysteine 480–cysteine 500, and cysteine 513–cysteine 528. Positions 168-173 (GAIADY) are fusion loop. The chain crosses the membrane as a helical span at residues 575–595 (MLSKMFHLVAGTAVAFFTGSL). The Cytoplasmic portion of the chain corresponds to 596 to 628 (GYRAGRWVDGEYQIKGGFDPLKSRSVSRAKRGR). A helical membrane pass occupies residues 629-649 (FLIGLIAELVSFLLGFYVILL). Position 650 (valine 650) is a topological domain, extracellular. A helical membrane pass occupies residues 651–671 (PIWAQLMVILGYVLFKYYTPF).

Belongs to the HAP2/GCS1 family. Fusexin 1 subfamily. In terms of assembly, homotrimer stabilized by interdomain contacts and numerous Ca(2+) and Na(+) ions.

It localises to the cell surface. Its subcellular location is the cell membrane. In terms of biological role, exhibits fusogenic activity. Mediates cell-cell fusion in mammalian cells (bilateral fusion). This is Fusexin 1 from Natrinema altunense (strain JCM 12890 / CGMCC 1.3731 / AJ2).